Here is a 161-residue protein sequence, read N- to C-terminus: MPSFDTVCEANFVEVKNAVENTAKEIGTRFDFKGTSAAVELKDKEITLYGDADFQLQQVEDILRNKLTKRNVDVRFLDAQKPQKIGGDKLKQVVKVKNGIDSEQAKKIQRLIKDSKLKLQAAIQEDKVRVTGAKRDDLQAAMALIRKDIADLPLTFDNFRD.

Belongs to the YajQ family.

Nucleotide-binding protein. This is Nucleotide-binding protein Ajs_2750 from Acidovorax sp. (strain JS42).